Here is a 446-residue protein sequence, read N- to C-terminus: Phosphoglucosamine mutase (446 aa).

Residue Ser-101 is the Phosphoserine intermediate of the active site. 4 residues coordinate Mg(2+): Ser-101, Asp-240, Asp-242, and Asp-244. Position 101 is a phosphoserine (Ser-101).

It belongs to the phosphohexose mutase family. The cofactor is Mg(2+). Post-translationally, activated by phosphorylation.

It carries out the reaction alpha-D-glucosamine 1-phosphate = D-glucosamine 6-phosphate. Its function is as follows. Catalyzes the conversion of glucosamine-6-phosphate to glucosamine-1-phosphate. The sequence is that of Phosphoglucosamine mutase from Pseudomonas entomophila (strain L48).